The following is a 351-amino-acid chain: Molybdate-binding protein MolA (351 aa).

Residues 1–21 (MKLKSLLIACLLSSLSFSALA) form the signal peptide. The region spanning 41-322 (RAVVLQHQTL…WLAKALYPQR (282 aa)) is the Fe/B12 periplasmic-binding domain. Residues 47 to 48 (HQ), tyrosine 217, arginine 264, and 300 to 301 (GY) contribute to the molybdate site.

It belongs to the bacterial solute-binding protein 8 family. The complex is composed of two ATP-binding proteins (MolC), two transmembrane proteins (MolB) and a solute-binding protein (MolA).

The protein resides in the periplasm. The MolBCA complex shows a decrease in affinity in the presence of increasing concentrations of substrate and nucleotide. Functionally, part of the ABC transporter complex MolBCA involved in molybdate import. Functions as a low-affinity molybdate transporter. Binds to both molybdate and tungstate, but not to sulfate or phosphate. The polypeptide is Molybdate-binding protein MolA (Haemophilus influenzae (strain ATCC 51907 / DSM 11121 / KW20 / Rd)).